Reading from the N-terminus, the 326-residue chain is METSNFTLFDPRCRAEAPFAIDAIKQLDIFGKVLYTVLTLMATASMLVFIEECIYIYKKVPAHKKSTIIWVTGVAPVMAIMSCLGMWVPRATMFTDMTSATYFAIVVFKFLILMIEEVGGDNAFLRRCEKQTFKISTGPCCCCCPCLPNVPITRRSLFILKLGSYQFALMKLVLTIFSIVLWTNGSFSLTNVSASGAAIWINSFIGVLTIIALWPVAIMFMHVREALRTLKIVPKYAMYQLVLILSQLQTAIINILALNGTIACSPPYSSQARGYMMSQQLLIVEMFIITLVTRVLYRRQYEPIPEPDDVEEKKTVLSSKKAIDVA.

Residues 1-28 (METSNFTLFDPRCRAEAPFAIDAIKQLD) are Extracellular-facing. The N-linked (GlcNAc...) asparagine glycan is linked to Asn5. The helical transmembrane segment at 29–49 (IFGKVLYTVLTLMATASMLVF) threads the bilayer. The Cytoplasmic portion of the chain corresponds to 50-67 (IEECIYIYKKVPAHKKST). The helical transmembrane segment at 68–88 (IIWVTGVAPVMAIMSCLGMWV) threads the bilayer. The Extracellular portion of the chain corresponds to 89 to 99 (PRATMFTDMTS). The chain crosses the membrane as a helical span at residues 100–120 (ATYFAIVVFKFLILMIEEVGG). Over 121-161 (DNAFLRRCEKQTFKISTGPCCCCCPCLPNVPITRRSLFILK) the chain is Cytoplasmic. The chain crosses the membrane as a helical span at residues 162 to 182 (LGSYQFALMKLVLTIFSIVLW). The Extracellular portion of the chain corresponds to 183–198 (TNGSFSLTNVSASGAA). Residues Asn184 and Asn191 are each glycosylated (N-linked (GlcNAc...) asparagine). Residues 199-219 (IWINSFIGVLTIIALWPVAIM) form a helical membrane-spanning segment. The Cytoplasmic segment spans residues 220 to 237 (FMHVREALRTLKIVPKYA). Residues 238–258 (MYQLVLILSQLQTAIINILAL) traverse the membrane as a helical segment. The N-linked (GlcNAc...) asparagine glycan is linked to Asn259. The Extracellular portion of the chain corresponds to 259–275 (NGTIACSPPYSSQARGY). Residues 276-296 (MMSQQLLIVEMFIITLVTRVL) form a helical membrane-spanning segment. The Cytoplasmic segment spans residues 297 to 326 (YRRQYEPIPEPDDVEEKKTVLSSKKAIDVA).

This sequence belongs to the OST-alpha family. In terms of assembly, interacts with slc51b. The Ost-alpha/Ost-beta complex is a heterodimer composed of alpha (slc51a) and beta (slc51b) subunit.

It is found in the cell membrane. Its subcellular location is the endoplasmic reticulum membrane. The enzyme catalyses taurocholate(out) = taurocholate(in). It catalyses the reaction prostaglandin E2(out) = prostaglandin E2(in). It carries out the reaction estrone 3-sulfate(out) = estrone 3-sulfate(in). The catalysed reaction is dehydroepiandrosterone 3-sulfate(out) = dehydroepiandrosterone 3-sulfate(in). The enzyme catalyses tauroursodeoxycholate(out) = tauroursodeoxycholate(in). It catalyses the reaction glycoursodeoxycholate(out) = glycoursodeoxycholate(in). It carries out the reaction glycocholate(out) = glycocholate(in). The catalysed reaction is taurochenodeoxycholate(out) = taurochenodeoxycholate(in). The enzyme catalyses glycochenodeoxycholate(out) = glycochenodeoxycholate(in). It catalyses the reaction taurodeoxycholate(out) = taurodeoxycholate(in). It carries out the reaction glycodeoxycholate(out) = glycodeoxycholate(in). Functionally, essential component of the Ost-alpha/Ost-beta complex, a heterodimer that acts as the intestinal basolateral transporter responsible for the translocation of bile acids (such as taurocholate), steroids (such as estrone sulfate), and eicosanoids (such as prostaglandin E2). The protein is Organic solute transporter subunit alpha (slc51a) of Danio rerio (Zebrafish).